A 353-amino-acid chain; its full sequence is UPF0283 membrane protein YPTS_2342 (353 aa).

The next 3 helical transmembrane spans lie at 71–91 (MVTAGMVILGASVIAQSVQWV), 101–121 (IALGATTAGGLIILAGVGSVV), and 214–234 (ESALMIAVSPLALVDMAFIAW).

Belongs to the UPF0283 family.

The protein localises to the cell inner membrane. The sequence is that of UPF0283 membrane protein YPTS_2342 from Yersinia pseudotuberculosis serotype IB (strain PB1/+).